Here is a 208-residue protein sequence, read N- to C-terminus: ATP phosphoribosyltransferase (208 aa).

It belongs to the ATP phosphoribosyltransferase family. Short subfamily. In terms of assembly, heteromultimer composed of HisG and HisZ subunits.

Its subcellular location is the cytoplasm. It carries out the reaction 1-(5-phospho-beta-D-ribosyl)-ATP + diphosphate = 5-phospho-alpha-D-ribose 1-diphosphate + ATP. It functions in the pathway amino-acid biosynthesis; L-histidine biosynthesis; L-histidine from 5-phospho-alpha-D-ribose 1-diphosphate: step 1/9. Its function is as follows. Catalyzes the condensation of ATP and 5-phosphoribose 1-diphosphate to form N'-(5'-phosphoribosyl)-ATP (PR-ATP). Has a crucial role in the pathway because the rate of histidine biosynthesis seems to be controlled primarily by regulation of HisG enzymatic activity. This chain is ATP phosphoribosyltransferase, found in Oceanobacillus iheyensis (strain DSM 14371 / CIP 107618 / JCM 11309 / KCTC 3954 / HTE831).